Here is a 448-residue protein sequence, read N- to C-terminus: Glutamate--tRNA ligase (448 aa).

A 'HIGH' region motif is present at residues 10 to 20 (PSPTGFLHIGN). The 'KMSKS' region signature appears at 214 to 218 (KLSKR). Lysine 217 provides a ligand contact to ATP.

It belongs to the class-I aminoacyl-tRNA synthetase family. Glutamate--tRNA ligase type 1 subfamily. In terms of assembly, monomer.

The protein resides in the cytoplasm. The enzyme catalyses tRNA(Glu) + L-glutamate + ATP = L-glutamyl-tRNA(Glu) + AMP + diphosphate. In terms of biological role, catalyzes the attachment of glutamate to tRNA(Glu) in a two-step reaction: glutamate is first activated by ATP to form Glu-AMP and then transferred to the acceptor end of tRNA(Glu). This chain is Glutamate--tRNA ligase, found in Phytoplasma australiense.